The following is a 213-amino-acid chain: Small ribosomal subunit protein uS3 (213 aa).

The KH type-2 domain occupies 38-106; the sequence is IRKYVKEKIF…EFALEVSEIR (69 aa).

It belongs to the universal ribosomal protein uS3 family. As to quaternary structure, part of the 30S ribosomal subunit. Forms a tight complex with proteins S10 and S14.

Its function is as follows. Binds the lower part of the 30S subunit head. Binds mRNA in the 70S ribosome, positioning it for translation. The sequence is that of Small ribosomal subunit protein uS3 from Maridesulfovibrio salexigens (strain ATCC 14822 / DSM 2638 / NCIMB 8403 / VKM B-1763) (Desulfovibrio salexigens).